The chain runs to 120 residues: Acylphosphatase-1 (120 aa).

Alanine 2 is subject to N-acetylalanine. Residues 8-98 enclose the Acylphosphatase-like domain; it reads SCEFEVFGRV…YGYANFHIKP (91 aa). Catalysis depends on residues arginine 23 and asparagine 41. Residues 91–120 form a disordered region; sequence YANFHIKPDPHENRPVHEGLGSSSSHHDSN. A compositionally biased stretch (basic and acidic residues) spans 96–107; it reads IKPDPHENRPVH.

Belongs to the acylphosphatase family.

The protein resides in the cytoplasm. It carries out the reaction an acyl phosphate + H2O = a carboxylate + phosphate + H(+). The chain is Acylphosphatase-1 (Acyp) from Drosophila melanogaster (Fruit fly).